The primary structure comprises 146 residues: Ribosome maturation factor RimP (146 aa).

It belongs to the RimP family.

The protein localises to the cytoplasm. Functionally, required for maturation of 30S ribosomal subunits. The protein is Ribosome maturation factor RimP of Helicobacter pylori (strain P12).